A 141-amino-acid polypeptide reads, in one-letter code: HTH-type transcriptional repressor NsrR (141 aa).

In terms of domain architecture, HTH rrf2-type spans 2–129 (QLTSFTDYGL…DNYTLADLVE (128 aa)). A DNA-binding region (H-T-H motif) is located at residues 28–51 (ISEVTDVYGVSRNHMVKIINQLSR). Cys-91, Cys-96, and Cys-102 together coordinate [2Fe-2S] cluster.

[2Fe-2S] cluster is required as a cofactor.

Functionally, nitric oxide-sensitive repressor of genes involved in protecting the cell against nitrosative stress. May require iron for activity. In Escherichia fergusonii (strain ATCC 35469 / DSM 13698 / CCUG 18766 / IAM 14443 / JCM 21226 / LMG 7866 / NBRC 102419 / NCTC 12128 / CDC 0568-73), this protein is HTH-type transcriptional repressor NsrR.